The following is a 397-amino-acid chain: Probable N-succinyldiaminopimelate aminotransferase DapC (397 aa).

Pyridoxal 5'-phosphate-binding positions include 109–110 (GS) and 218–222 (DGMAE). N6-(pyridoxal phosphate)lysine is present on Lys-232.

Belongs to the class-III pyridoxal-phosphate-dependent aminotransferase family. Homodimer. It depends on pyridoxal 5'-phosphate as a cofactor.

The protein localises to the cytoplasm. It carries out the reaction N-succinyl-(2S,6S)-2,6-diaminopimelate + 2-oxoglutarate = (S)-2-succinylamino-6-oxoheptanedioate + L-glutamate. Its pathway is amino-acid biosynthesis; L-lysine biosynthesis via DAP pathway; LL-2,6-diaminopimelate from (S)-tetrahydrodipicolinate (succinylase route): step 2/3. In terms of biological role, involved in the lysine biosynthetic pathways. It catalyzes the transfer of an amino group from L-glutamate to N-succinyl-2-l-amino-6-oxoheptanedioate (N-succinyl-2-l-amino-6-ketopimelate) in a PLP-dependent reaction, yielding as products N-succinyl-l-2,6-diaminoheptanedioate (N-succinyl-diaminopimelate) and 2-oxoglutarate. This is Probable N-succinyldiaminopimelate aminotransferase DapC (dapC) from Mycobacterium tuberculosis (strain CDC 1551 / Oshkosh).